The chain runs to 270 residues: MSRIEGVLKALKEQGRKALIPYITAGDPHPEETVSLMHTLVSAGADIIELGVPFSDPMADGPVIQLACERALKHGTSLRQVMAMVKEFRKTDPDTPVVLMGYLNPMEAMGYEAFADAAADAGVDGVLTVDLPPEEADQVAPLFADRHLDPVFLLAPTTTDERIKAISEHSSGYVYYVSIKGVTGSATIDVDEVAKKVAHVHELTALPVGVGFGIRDAETAAAVGRVSDGVIVGSVLVDTIARHQTDPDALRNALTDLLHPMREALDSLAH.

Residues Glu49 and Asp60 each act as proton acceptor in the active site.

The protein belongs to the TrpA family. As to quaternary structure, tetramer of two alpha and two beta chains.

It carries out the reaction (1S,2R)-1-C-(indol-3-yl)glycerol 3-phosphate + L-serine = D-glyceraldehyde 3-phosphate + L-tryptophan + H2O. It functions in the pathway amino-acid biosynthesis; L-tryptophan biosynthesis; L-tryptophan from chorismate: step 5/5. Functionally, the alpha subunit is responsible for the aldol cleavage of indoleglycerol phosphate to indole and glyceraldehyde 3-phosphate. This Marinobacter nauticus (strain ATCC 700491 / DSM 11845 / VT8) (Marinobacter aquaeolei) protein is Tryptophan synthase alpha chain.